The following is a 415-amino-acid chain: Arrestin domain-containing protein 4 (415 aa).

Short sequence motifs (PPxY motif) lie at residues 347–350 (PPNY) and 392–395 (PPLY).

This sequence belongs to the arrestin family. Interacts with ADRB2. Interacts (via PPxY motifs) with ITCH, NEDD4L and WWP2. Interacts with AVPR2. Identified in a complex containing at least ARRDC4, AVPR2 and HGS. Interacts with SLC11A2; controls the incorporation of SLC11A2 into extracellular vesicles through an ubiquitination-dependent mechanism. Interacts with TRIM65.

The protein localises to the early endosome. The protein resides in the cell membrane. It localises to the cytoplasmic vesicle. Its function is as follows. Functions as an adapter recruiting ubiquitin-protein ligases to their specific substrates. Plays a role in endocytosis of activated G protein-coupled receptors (GPCRs). Through an ubiquitination-dependent mechanism also plays a role in the incorporation of SLC11A2 into extracellular vesicles. May play a role in glucose uptake. Participates in innate immune response by promoting IFIH1/MDA5 activation through interaction with TRIM65. This is Arrestin domain-containing protein 4 from Mus musculus (Mouse).